The chain runs to 238 residues: MTQPRQALLDAFGVDLPDELLSLALTHRSYAYEHGGLPTNERLEFLGDAVLSLTITDELFHRHPDRSEGDLAKLRASVVNTQALAYVARNLSDGGLGVYLLLGRGETNTGGADKSSILADGMESLLGAIYLHHGIEVARQVILRLFGTLLDAAPTLGAGLDWKTSLQELTAARGMGVPSYVVTSTGPDHDKEFTAVVVVMDTEYGSGIGHSKKEAEQKAASAAWKALDVLGGVGKTSV.

Residues Pro-4–Gly-134 enclose the RNase III domain. Glu-44 contributes to the Mg(2+) binding site. Asp-48 is an active-site residue. The Mg(2+) site is built by Asp-120 and Glu-123. Glu-123 is a catalytic residue. Positions Asp-161–Val-229 constitute a DRBM domain.

Belongs to the ribonuclease III family. As to quaternary structure, homodimer. The cofactor is Mg(2+).

The protein localises to the cytoplasm. It carries out the reaction Endonucleolytic cleavage to 5'-phosphomonoester.. Its function is as follows. Digests double-stranded RNA. Involved in the processing of primary rRNA transcript to yield the immediate precursors to the large and small rRNAs (23S and 16S). Processes some mRNAs, and tRNAs when they are encoded in the rRNA operon. Processes pre-crRNA and tracrRNA of type II CRISPR loci if present in the organism. In Mycobacterium leprae (strain TN), this protein is Ribonuclease 3.